Reading from the N-terminus, the 170-residue chain is Small ribosomal subunit protein uS13m (170 aa).

A disordered region spans residues 130–170; the sequence is LKKKPTNRKERRIFNKIKKLQDKHNKQQQKNKKSKKWKTKK. Basic residues-rich tracts occupy residues 132 to 147 and 155 to 170; these read KKPT…NKIK and KQQQ…KTKK.

Belongs to the universal ribosomal protein uS13 family. Part of the small ribosomal subunit.

It is found in the mitochondrion. Functionally, located at the top of the head of the small subunit, it contacts several helices of the small subunit rRNA. This chain is Small ribosomal subunit protein uS13m (mrps13), found in Dictyostelium citrinum (Slime mold).